A 156-amino-acid chain; its full sequence is MSRRHSAEKREVLPDPKFGNIVITKFMNSVMYAGKKSVAEGIVYGALGIIETKTKQNPLGVFEQALENVMPTIEVRSRRVGGATYQVPVEVRSTRRQALGIRWLISAARERNEKTMTERLSAELLDASNNRGNAVKKREDVHRMAEANRAFSHYRW.

This sequence belongs to the universal ribosomal protein uS7 family. As to quaternary structure, part of the 30S ribosomal subunit. Contacts proteins S9 and S11.

Functionally, one of the primary rRNA binding proteins, it binds directly to 16S rRNA where it nucleates assembly of the head domain of the 30S subunit. Is located at the subunit interface close to the decoding center, probably blocks exit of the E-site tRNA. The polypeptide is Small ribosomal subunit protein uS7 (Bradyrhizobium diazoefficiens (strain JCM 10833 / BCRC 13528 / IAM 13628 / NBRC 14792 / USDA 110)).